A 602-amino-acid chain; its full sequence is Elongation factor 4 (602 aa).

A tr-type G domain is found at 6-188 (DRIRNFCIIA…RIVRDVPPPG (183 aa)). Residues 18-23 (DHGKST) and 135-138 (NKID) contribute to the GTP site.

The protein belongs to the TRAFAC class translation factor GTPase superfamily. Classic translation factor GTPase family. LepA subfamily.

The protein resides in the cell membrane. The catalysed reaction is GTP + H2O = GDP + phosphate + H(+). Functionally, required for accurate and efficient protein synthesis under certain stress conditions. May act as a fidelity factor of the translation reaction, by catalyzing a one-codon backward translocation of tRNAs on improperly translocated ribosomes. Back-translocation proceeds from a post-translocation (POST) complex to a pre-translocation (PRE) complex, thus giving elongation factor G a second chance to translocate the tRNAs correctly. Binds to ribosomes in a GTP-dependent manner. The sequence is that of Elongation factor 4 from Desulforudis audaxviator (strain MP104C).